A 565-amino-acid chain; its full sequence is Putative lipase ATG15 (565 aa).

Residues 1–21 are Cytoplasmic-facing; sequence MISNDYTKFSSKRRSLRYSNR. The chain crosses the membrane as a helical; Signal-anchor for type II membrane protein span at residues 22–42; the sequence is ILLLMGTILLIVVYFYSDILV. At 43-565 the chain is on the lumenal side; sequence DKSIIMFRNE…EYTTFTKRLI (523 aa). Asn-217 is a glycosylation site (N-linked (GlcNAc...) asparagine). Residue Ser-347 is the Charge relay system of the active site. Residues 488-538 form a disordered region; that stretch reads KKPKKQTTSSSSEKVDTSTTKSIDRTTITTRTNEKKWHPNPKDPSTTTTDD. The segment covering 493-518 has biased composition (low complexity); that stretch reads QTTSSSSEKVDTSTTKSIDRTTITTR. The span at 519–528 shows a compositional bias: basic and acidic residues; the sequence is TNEKKWHPNP.

Belongs to the AB hydrolase superfamily. Lipase family. Binds to both phosphatidylinositol (PI) and phosphatidylinositol 3,5-bisphosphate (PIP2).

It is found in the endosome. It localises to the multivesicular body membrane. Its subcellular location is the prevacuolar compartment membrane. The enzyme catalyses a triacylglycerol + H2O = a diacylglycerol + a fatty acid + H(+). In terms of biological role, lipase which is essential for lysis of subvacuolar cytoplasm to vacuole targeted bodies and intravacuolar autophagic bodies. Involved in the lysis of intravacuolar multivesicular body (MVB) vesicles. The intravacuolar membrane disintegration by ATG15 is critical to life span extension. In Vanderwaltozyma polyspora (strain ATCC 22028 / DSM 70294 / BCRC 21397 / CBS 2163 / NBRC 10782 / NRRL Y-8283 / UCD 57-17) (Kluyveromyces polysporus), this protein is Putative lipase ATG15 (ATG15).